Consider the following 534-residue polypeptide: Autophagy-related protein 20 (534 aa).

The interval 1-21 (MAQDDSYEEKPEVISSDSGGS) is disordered. The 137-residue stretch at 1-137 (MAQDDSYEEK…DKFIHSTVSW (137 aa)) folds into the PX domain. A 1,2-diacyl-sn-glycero-3-phospho-(1D-myo-inositol-3-phosphate) is bound by residues arginine 55, serine 57, lysine 81, and arginine 104. The disordered stretch occupies residues 179–272 (ANSLSPPSSR…NGKDAPSPVL (94 aa)). Residues 203-212 (SSLEPSSPLG) show a composition bias toward low complexity. Residues 245–263 (YNSSPSELSPTQRRSSISN) are compositionally biased toward polar residues.

Belongs to the sorting nexin family.

The protein resides in the cytoplasm. It localises to the endosome membrane. Its subcellular location is the preautophagosomal structure membrane. Required for cytoplasm to vacuole transport (Cvt), pexophagy and mitophagy. Also involved in endoplasmic reticulum-specific autophagic process and is essential for the survival of cells subjected to severe ER stress. Functions in protein retrieval from the endocytic pathway. This chain is Autophagy-related protein 20 (atg20), found in Schizosaccharomyces pombe (strain 972 / ATCC 24843) (Fission yeast).